The sequence spans 375 residues: Alcohol dehydrogenase 1A (375 aa).

Ser-2 bears the N-acetylserine mark. A Phosphoserine modification is found at Ser-23. Cys-47 provides a ligand contact to Zn(2+). 48 to 52 contributes to the NAD(+) binding site; it reads GTDDH. Zn(2+) contacts are provided by His-68, Cys-98, Cys-101, Cys-104, Cys-112, and Cys-175. Residues 200–205, Asp-224, Lys-229, Ile-270, 293–295, 318–320, and Arg-370 each bind NAD(+); these read GLGGVG, VGV, and AVL.

It belongs to the zinc-containing alcohol dehydrogenase family. In terms of assembly, dimer of identical or heterodimer of closely related subunits alpha, beta, or gamma that are encoded by genes ADH1A, ADH1B, and ADH1C, respectively. Zn(2+) is required as a cofactor.

Its subcellular location is the cytoplasm. It catalyses the reaction a primary alcohol + NAD(+) = an aldehyde + NADH + H(+). It carries out the reaction a secondary alcohol + NAD(+) = a ketone + NADH + H(+). The enzyme catalyses butan-1-ol + NAD(+) = butanal + NADH + H(+). The catalysed reaction is 1-propanol + NAD(+) = propanal + NADH + H(+). Functionally, alcohol dehydrogenase. Oxidizes primary as well as secondary alcohols. Ethanol is a very poor substrate. The polypeptide is Alcohol dehydrogenase 1A (ADH1A) (Pongo abelii (Sumatran orangutan)).